The chain runs to 181 residues: Oligoribonuclease (181 aa).

An Exonuclease domain is found at 8–171; that stretch reads LIWIDLEMTG…DDIRESIAEL (164 aa). Tyrosine 129 is an active-site residue.

It belongs to the oligoribonuclease family.

It localises to the cytoplasm. Its function is as follows. 3'-to-5' exoribonuclease specific for small oligoribonucleotides. This is Oligoribonuclease from Vibrio cholerae serotype O1 (strain ATCC 39541 / Classical Ogawa 395 / O395).